We begin with the raw amino-acid sequence, 632 residues long: Golgin subfamily A member 8M (632 aa).

Positions 1–77 (MAEETQHNKL…SSATLKDLES (77 aa)) are disordered. Polar residues predominate over residues 38–50 (TNGSIPQTATSGG). 2 coiled-coil regions span residues 86–154 (LDSR…HMKR) and 209–421 (KLEQ…SLMA). The span at 352 to 362 (KQEERIQEQHK) shows a compositional bias: basic and acidic residues. 3 disordered regions span residues 352 to 384 (KQEE…NKST), 422 to 456 (LPGE…REAM), and 505 to 524 (DAAL…DEGE). A compositionally biased stretch (gly residues) spans 508 to 520 (LGGGHHQAGAQGG).

Belongs to the GOLGA8 family.

The polypeptide is Golgin subfamily A member 8M (Homo sapiens (Human)).